The primary structure comprises 498 residues: ATP synthase subunit beta, chloroplastic (498 aa).

Gly172–Thr179 is a binding site for ATP.

The protein belongs to the ATPase alpha/beta chains family. As to quaternary structure, F-type ATPases have 2 components, CF(1) - the catalytic core - and CF(0) - the membrane proton channel. CF(1) has five subunits: alpha(3), beta(3), gamma(1), delta(1), epsilon(1). CF(0) has four main subunits: a(1), b(1), b'(1) and c(9-12).

It localises to the plastid. The protein localises to the chloroplast thylakoid membrane. It catalyses the reaction ATP + H2O + 4 H(+)(in) = ADP + phosphate + 5 H(+)(out). Functionally, produces ATP from ADP in the presence of a proton gradient across the membrane. The catalytic sites are hosted primarily by the beta subunits. The chain is ATP synthase subunit beta, chloroplastic from Trochodendron aralioides (Wheel tree).